A 257-amino-acid polypeptide reads, in one-letter code: MTPSEFRQSVRHGAFRGPTAGHCGPYAQANLAILPEAVAHDFLRFCQANPKACPLLGVGEPGAFRVDALGEDLDIRTDVPSYNVYRDGRLTERVESLEALWRDDFVVFAIGCSFSFEDMLAREGIGLRHVEEGRNVPMYRTSIPNRRAGIFGGQLVVSMRPMRGADAIRAVQITSRFPGVHGAPIHLGDPRELGIADLNAPEFGDAVTIRDGELPVFWACGVTPQTALMDAKLPIAIAHTPGHMLMTDITNASLAVF.

It belongs to the D-glutamate cyclase family.

The sequence is that of Putative hydro-lyase Bcep18194_B2576 from Burkholderia lata (strain ATCC 17760 / DSM 23089 / LMG 22485 / NCIMB 9086 / R18194 / 383).